Reading from the N-terminus, the 110-residue chain is Large ribosomal subunit protein uL22 (110 aa).

Belongs to the universal ribosomal protein uL22 family. Part of the 50S ribosomal subunit.

In terms of biological role, this protein binds specifically to 23S rRNA; its binding is stimulated by other ribosomal proteins, e.g. L4, L17, and L20. It is important during the early stages of 50S assembly. It makes multiple contacts with different domains of the 23S rRNA in the assembled 50S subunit and ribosome. Functionally, the globular domain of the protein is located near the polypeptide exit tunnel on the outside of the subunit, while an extended beta-hairpin is found that lines the wall of the exit tunnel in the center of the 70S ribosome. The polypeptide is Large ribosomal subunit protein uL22 (Pseudomonas aeruginosa (strain LESB58)).